A 137-amino-acid chain; its full sequence is Holo-[acyl-carrier-protein] synthase (137 aa).

2 residues coordinate Mg(2+): aspartate 8 and glutamate 57.

The protein belongs to the P-Pant transferase superfamily. AcpS family. Mg(2+) serves as cofactor.

Its subcellular location is the cytoplasm. The catalysed reaction is apo-[ACP] + CoA = holo-[ACP] + adenosine 3',5'-bisphosphate + H(+). In terms of biological role, transfers the 4'-phosphopantetheine moiety from coenzyme A to a Ser of acyl-carrier-protein. This is Holo-[acyl-carrier-protein] synthase from Hyphomonas neptunium (strain ATCC 15444).